Here is a 391-residue protein sequence, read N- to C-terminus: Formate-dependent phosphoribosylglycinamide formyltransferase (391 aa).

Residues 20-21 and glutamate 80 each bind N(1)-(5-phospho-beta-D-ribosyl)glycinamide; that span reads EL. ATP-binding positions include arginine 112, lysine 153, 158–163, 193–196, and glutamate 201; these read SSGKGQ and EGFI. The ATP-grasp domain maps to 117–306; sequence RLAAETLGLP…EFALHVRAIL (190 aa). Mg(2+) contacts are provided by glutamate 265 and glutamate 277. N(1)-(5-phospho-beta-D-ribosyl)glycinamide-binding positions include aspartate 284, lysine 354, and 361–362; that span reads RR.

The protein belongs to the PurK/PurT family. In terms of assembly, homodimer.

It catalyses the reaction N(1)-(5-phospho-beta-D-ribosyl)glycinamide + formate + ATP = N(2)-formyl-N(1)-(5-phospho-beta-D-ribosyl)glycinamide + ADP + phosphate + H(+). It participates in purine metabolism; IMP biosynthesis via de novo pathway; N(2)-formyl-N(1)-(5-phospho-D-ribosyl)glycinamide from N(1)-(5-phospho-D-ribosyl)glycinamide (formate route): step 1/1. Its function is as follows. Involved in the de novo purine biosynthesis. Catalyzes the transfer of formate to 5-phospho-ribosyl-glycinamide (GAR), producing 5-phospho-ribosyl-N-formylglycinamide (FGAR). Formate is provided by PurU via hydrolysis of 10-formyl-tetrahydrofolate. This chain is Formate-dependent phosphoribosylglycinamide formyltransferase, found in Shewanella sp. (strain ANA-3).